A 948-amino-acid chain; its full sequence is Protocadherin alpha-2 (948 aa).

The signal sequence occupies residues 1-22; the sequence is MASSIRRGRGAWTRLLSLLLLA. Residues 23–697 are Extracellular-facing; it reads AWEVGSGQLR…GSEATLVDVN (675 aa). 6 Cadherin domains span residues 30-133, 157-242, 243-350, 351-455, 456-565, and 588-678; these read QLRY…PPIF, ASDA…EPTF, AQSV…TPEV, SITS…APAF, AQPE…APAL, and GHVV…APKA. N-linked (GlcNAc...) asparagine glycosylation is found at Asn-257, Asn-265, Asn-362, and Asn-548. Residues 698-718 form a helical membrane-spanning segment; the sequence is VYLIIAICAVSSLLVLTVLLY. The Cytoplasmic segment spans residues 719-948; the sequence is TALRCSVPPT…GNSTTDNSDQ (230 aa). The stretch at 734–737 is one PXXP 1 repeat; that stretch reads PGKP. The interval 734-892 is 5 X 4 AA repeats of P-X-X-P; that stretch reads PGKPTLVCSS…PDKFIIPGSP (159 aa). Disordered regions lie at residues 754–801, 829–854, and 868–948; these read RRQR…RQPN, GPGG…EVSP, and KYGP…NSDQ. The segment covering 783–795 has biased composition (basic and acidic residues); that stretch reads AEEKQLSESEYVG. 4 PXXP repeats span residues 797-800, 830-833, 871-874, and 889-892; these read PRQP, PGGP, PGNP, and PGSP. Over residues 907 to 921 the composition is skewed to basic and acidic residues; that stretch reads DKSDFITFGKKEETK.

Its subcellular location is the cell membrane. Its function is as follows. Potential calcium-dependent cell-adhesion protein. May be involved in the establishment and maintenance of specific neuronal connections in the brain. The polypeptide is Protocadherin alpha-2 (PCDHA2) (Homo sapiens (Human)).